Reading from the N-terminus, the 155-residue chain is Large ribosomal subunit protein uL22c (155 aa).

The protein belongs to the universal ribosomal protein uL22 family. Part of the 50S ribosomal subunit.

The protein resides in the plastid. It is found in the chloroplast. Functionally, this protein binds specifically to 23S rRNA. In terms of biological role, the globular domain of the protein is located near the polypeptide exit tunnel on the outside of the subunit, while an extended beta-hairpin is found that lines the wall of the exit tunnel in the center of the 70S ribosome. This Atropa belladonna (Belladonna) protein is Large ribosomal subunit protein uL22c (rpl22).